We begin with the raw amino-acid sequence, 843 residues long: Beta-mannosidase B (843 aa).

The Proton donor role is filled by E430. N-linked (GlcNAc...) asparagine glycosylation is present at N721.

It belongs to the glycosyl hydrolase 2 family. Beta-mannosidase B subfamily.

The enzyme catalyses Hydrolysis of terminal, non-reducing beta-D-mannose residues in beta-D-mannosides.. It participates in glycan metabolism; N-glycan degradation. Exoglycosidase that cleaves the single beta-linked mannose residue from the non-reducing end of beta-mannosidic oligosaccharides of various complexity and length. Prefers mannobiose over mannotriose and has no activity against polymeric mannan. Is also severely restricted by galactosyl substitutions at the +1 subsite. This Aspergillus terreus (strain NIH 2624 / FGSC A1156) protein is Beta-mannosidase B (mndB).